Consider the following 361-residue polypeptide: Phospho-N-acetylmuramoyl-pentapeptide-transferase (361 aa).

The next 11 helical transmembrane spans lie at 10–30, 40–60, 84–104, 107–127, 147–167, 175–195, 206–226, 232–252, 260–280, 288–308, and 341–361; these read PGTG…ACLI, LSLP…IGVP, GTPT…GSLV, GDPR…IGGI, LLLQ…HGAI, WGWL…VFLA, LDGL…LQLM, GDPA…GFLL, VFMG…IALL, LLMG…VWVF, and VVVS…VLVP.

The protein belongs to the glycosyltransferase 4 family. MraY subfamily. Requires Mg(2+) as cofactor.

Its subcellular location is the cell inner membrane. It carries out the reaction UDP-N-acetyl-alpha-D-muramoyl-L-alanyl-gamma-D-glutamyl-meso-2,6-diaminopimeloyl-D-alanyl-D-alanine + di-trans,octa-cis-undecaprenyl phosphate = di-trans,octa-cis-undecaprenyl diphospho-N-acetyl-alpha-D-muramoyl-L-alanyl-D-glutamyl-meso-2,6-diaminopimeloyl-D-alanyl-D-alanine + UMP. The protein operates within cell wall biogenesis; peptidoglycan biosynthesis. Functionally, catalyzes the initial step of the lipid cycle reactions in the biosynthesis of the cell wall peptidoglycan: transfers peptidoglycan precursor phospho-MurNAc-pentapeptide from UDP-MurNAc-pentapeptide onto the lipid carrier undecaprenyl phosphate, yielding undecaprenyl-pyrophosphoryl-MurNAc-pentapeptide, known as lipid I. This Synechococcus sp. (strain RCC307) protein is Phospho-N-acetylmuramoyl-pentapeptide-transferase.